We begin with the raw amino-acid sequence, 389 residues long: Tyrosinase-like protein phomQ1 (389 aa).

The helical transmembrane segment at 53–73 (TIIVVSVITFAAIIGCWVFLS) threads the bilayer. The Cu cation site is built by His-141 and His-150. Asn-220 carries N-linked (GlcNAc...) asparagine glycosylation. Cu cation-binding residues include His-290 and His-316.

This sequence belongs to the tyrosinase family. The cofactor is Cu(2+).

The protein resides in the membrane. The protein operates within mycotoxin biosynthesis. Its function is as follows. Tyrosinase-like protein; part of the gene cluster that mediates the biosynthesis of the phomopsins, a group of hexapeptide mycotoxins which infects lupins and causes lupinosis disease in livestock. Within the pathway, phomQ1 functions as a halogenase, converting. The pathway starts with the processing of the precursor phomA by several endopeptidases including kexin proteases as well as the cluster-specific S41 family peptidase phomP1 and the oligopeptidase phomG to produce 10 identical copies of the hexapeptide Tyr-Val-Ile-Pro-Ile-Asp. After being excised from the precursor peptide, the core peptides are cyclized and modified post-translationally by enzymes encoded within the gene cluster. The timing and order of proteolysis of the phomA precursor and PTMs are still unknown. Two tyrosinase-like enzymes, phomQ1 and phomQ2, catalyze the chlorination and hydroxylation of Tyr, respectively. PhomYb, is proposed to be involved in the construction of the macrocyclic structure. The other 4 ustYa family proteins may be involved in PTMs that generate the unique structure of phomopsin A. PhomYa is required for the hydroxylation of C-beta of Tyr. PhomYc, phomYd, and phomYe are responsible for the biosynthesis of 2,3-dehydroisoleucine (dIle), 2,3-dehydroaspartic acid (dAsp), and 3,4-dehydroproline (dPro), respectively. While dIle formation by phomYc is indispensable for the installation of dAsp by phomYd, the order of the other PTMs have not been elucidated yet. Most of the biosynthetic enzymes likely have broad substrate specificity, and thus, there might be a metabolic grid from a precursor to phomopsin A. The enzyme(s) responsible for the biosynthesis of 3,4-dehydrovaline (dVal) have also not been identified yet. Finally, phomM acts as an S-adenosylmethionine-dependent alpha-N-methyltransferase that catalyzes two successive N-methylation reactions, converting N-desmethyl-phomopsin A to phomopsin A and phomopsin A further to an N,N-dimethylated congener called phomopsin E. The polypeptide is Tyrosinase-like protein phomQ1 (Diaporthe leptostromiformis (Lupinosis disease fungus)).